The following is a 728-amino-acid chain: Fibulin-1 (728 aa).

A signal peptide spans Met1 to Ala17. 30 disulfide bridges follow: Cys23–Cys49, Cys24–Cys56, Cys37–Cys57, Cys66–Cys94, Cys79–Cys95, Cys97–Cys121, Cys98–Cys128, Cys111–Cys129, Cys159–Cys168, Cys164–Cys178, Cys180–Cys279, Cys285–Cys298, Cys292–Cys307, Cys347–Cys359, Cys353–Cys368, Cys375–Cys388, Cys394–Cys404, Cys399–Cys413, Cys415–Cys428, Cys434–Cys448, Cys442–Cys457, Cys459–Cys472, Cys478–Cys489, Cys485–Cys498, Cys500–Cys513, Cys519–Cys534, Cys530–Cys543, Cys545–Cys558, Cys564–Cys576, and Cys569–Cys585. Anaphylatoxin-like domains follow at residues Cys23–Asn64, Ala65–Asp96, and Cys97–Cys129. Residues Leu155 to Val194 form the EGF-like 1 domain. Residues Asp195–Val280 enclose the EGF-like 2; calcium-binding domain. The region spanning Asp281–Ile344 is the EGF-like 3; calcium-binding domain. Positions Asp343–Glu389 constitute an EGF-like 4; calcium-binding domain. Positions Asp390–Glu429 constitute an EGF-like 5; calcium-binding domain. The EGF-like 6; calcium-binding domain maps to Asp430–Glu473. Residues Asp474–Glu514 form the EGF-like 7; calcium-binding domain. The 45-residue stretch at Asp515–Val559 folds into the EGF-like 8; calcium-binding domain. Residues Asp560–Cys610 enclose the EGF-like 9; calcium-binding domain. Asn624 carries N-linked (GlcNAc...) asparagine glycosylation.

Belongs to the fibulin family. Homomultimerizes and interacts with various extracellular matrix components. Expressed in head muscle cells, anterior and posterior intestinal cells. Isoform a: Expressed in male and hermaphrodite gonad, anterior and posterior intestine and pharyngeal basement membranes, body-wall muscle, GLR cells, uterine attachment and mechanosensory neurons. Isoform c: Expressed on ALM/PLM mechanosensory neuron attachments, in flexible tracks connecting the pharyngeal, body-wall-muscle basement membranes and in uterine attachments.

It is found in the secreted. Its subcellular location is the extracellular space. It localises to the extracellular matrix. The protein localises to the basement membrane. Its function is as follows. Incorporated into fibronectin-containing matrix fibers. Plays a role in cell adhesion and migration along protein fibers within the extracellular matrix (ECM). Important for certain developmental processes and contributes to the supramolecular organization of ECM architecture, in particular to those of basement membranes. Functionally, involved in regulating the shape and adhesion of cells in the developing pharynx, intestine, body-wall muscle and gonadal tissue. During gonadogenesis, regulates the width of gonads and the migration of distal tip cells (DTC). Together with type IV collagen let-2 and downstream of metalloprotease mig-17, recruits nidogen nid-1 to the gonad basement membrane thereby inducing basement membrane remodeling required for the directional migration of DTCs. Acts antagonistically with metalloprotease gon-1 to maintain optimal levels of type IV collagen emb-9 in the gonad basement membrane during gonadogenesis. Required for larval development. In terms of biological role, involved in the assembly of the flexible hemicentin-containing tracks found joining the pharynx and body-wall-muscle basement membranes. This Caenorhabditis elegans protein is Fibulin-1 (fbl-1).